Reading from the N-terminus, the 285-residue chain is Baculoviral IAP repeat-containing protein 7 (285 aa).

Residues Glu18–His47 form a disordered region. Over residues Ser19–His47 the composition is skewed to basic and acidic residues. Residues Arg96–Leu161 form a BIR repeat. Zn(2+) contacts are provided by Cys130, Cys133, His150, and Cys157. The tract at residues Gln184–Asp225 is disordered. Residues Cys239–Arg273 form an RING-type zinc finger.

The protein belongs to the IAP family. As to quaternary structure, binds to caspase-9. Interaction with DIABLO/SMAC via the BIR domain disrupts binding to caspase-9 and apoptotic suppressor activity. Interacts with TAB1. In vitro, interacts with caspase-3 and caspase-7 via its BIR domain. In terms of processing, autoubiquitinated and undergoes proteasome-mediated degradation. Post-translationally, the truncated protein (tLivin) not only loses its anti-apoptotic effect but also acquires a pro-apoptotic effect.

The protein localises to the nucleus. It is found in the cytoplasm. The protein resides in the golgi apparatus. The catalysed reaction is S-ubiquitinyl-[E2 ubiquitin-conjugating enzyme]-L-cysteine + [acceptor protein]-L-lysine = [E2 ubiquitin-conjugating enzyme]-L-cysteine + N(6)-ubiquitinyl-[acceptor protein]-L-lysine.. Apoptotic regulator capable of exerting proapoptotic and anti-apoptotic activities and plays crucial roles in apoptosis, cell proliferation, and cell cycle control. Its anti-apoptotic activity is mediated through the inhibition of CASP3, CASP7 and CASP9, as well as by its E3 ubiquitin-protein ligase activity. As it is a weak caspase inhibitor, its anti-apoptotic activity is thought to be due to its ability to ubiquitinate DIABLO/SMAC targeting it for degradation thereby promoting cell survival. May contribute to caspase inhibition, by blocking the ability of DIABLO/SMAC to disrupt XIAP/BIRC4-caspase interactions. Protects against apoptosis induced by TNF or by chemical agents such as adriamycin, etoposide or staurosporine. Suppression of apoptosis is mediated by activation of MAPK8/JNK1, and possibly also of MAPK9/JNK2. This activation depends on TAB1 and MAP3K7/TAK1. In vitro, inhibits CASP3 and proteolytic activation of pro-CASP9. The polypeptide is Baculoviral IAP repeat-containing protein 7 (Birc7) (Mus musculus (Mouse)).